Consider the following 155-residue polypeptide: Fibroblast growth factor 2 (155 aa).

The propeptide occupies 1-9 (MAAGSITTL). The segment at 1–20 (MAAGSITTLPALPEDGGSSA) is disordered. Residue N36 participates in heparin binding. A Cell attachment site; atypical motif is present at residues 46–48 (DGR). A Phosphotyrosine; by TEC modification is found at Y82. The short motif at 88-90 (DGR) is the Cell attachment site; atypical element. Residue K95 forms a Glycyl lysine isopeptide (Lys-Gly) (interchain with G-Cter in SUMO1) linkage. The heparin-binding stretch occupies residues 128 to 144 (KRTGQYKLGPKTGPGQK).

This sequence belongs to the heparin-binding growth factors family. In terms of assembly, monomer. Homodimer. Interacts with FGFR1, FGFR2, FGFR3 and FGFR4. Affinity between fibroblast growth factors (FGFs) and their receptors is increased by heparan sulfate glycosaminoglycans that function as coreceptors. Interacts with CSPG4, FGFBP1 and TEC. Found in a complex with FGFBP1, FGF1 and FGF2. Interacts with FGFBP3. Interacts with integrin ITGAV:ITGB3; the interaction is required for FGF2 signaling. Interacts with SNORC (via the extracellular domain). Interacts with glypican GPC3. Phosphorylation at Tyr-82 regulates FGF2 unconventional secretion.

The protein localises to the secreted. Its subcellular location is the nucleus. Functionally, acts as a ligand for FGFR1, FGFR2, FGFR3 and FGFR4. Also acts as an integrin ligand which is required for FGF2 signaling. Binds to integrin ITGAV:ITGB3. Plays an important role in the regulation of cell survival, cell division, cell differentiation and cell migration. Functions as a potent mitogen in vitro. Can induce angiogenesis. Mediates phosphorylation of ERK1/2 and thereby promotes retinal lens fiber differentiation. This is Fibroblast growth factor 2 (FGF2) from Ovis aries (Sheep).